We begin with the raw amino-acid sequence, 60 residues long: Protein YoaG (60 aa).

Homodimer.

In Escherichia coli O157:H7, this protein is Protein YoaG (yoaG).